Consider the following 76-residue polypeptide: GLPDGVEDLPKAEDDHAHDYVNDAADTDHARFQEGQLCENCQFWVDYVNGWGYCQHPDFTDVLVRGEGWCSVYAPA.

[4Fe-4S] cluster contacts are provided by C38, C41, C54, and C70.

Belongs to the high-potential iron-sulfur protein (HiPIP) family. Homodimer.

In terms of biological role, specific class of high-redox-potential 4Fe-4S ferredoxins. Functions in anaerobic electron transport in most purple and in some other photosynthetic bacteria and in at least one genus (Paracoccus) of halophilic, denitrifying bacteria. This chain is High-potential iron-sulfur protein isozyme 2 (hip2), found in Halorhodospira halophila (Ectothiorhodospira halophila).